Consider the following 541-residue polypeptide: Ankyrin repeat domain-containing protein 13C (541 aa).

A compositionally biased stretch (basic and acidic residues) spans 1–20; sequence MTGEKIRSLRRDHKPSKEDG. Residues 1 to 53 are disordered; sequence MTGEKIRSLRRDHKPSKEDGDVLEPCEEEATAALGGAFTGGRSGPGGSGKGGK. The segment covering 21 to 30 has biased composition (acidic residues); the sequence is DVLEPCEEEA. Residues 37–52 show a composition bias toward gly residues; sequence AFTGGRSGPGGSGKGG. ANK repeat units follow at residues 111 to 142, 143 to 172, and 176 to 205; these read PSLYPVHECVFKGDVRRLSSLIRTHNIGQKDN, HGNTPLHLAVMLGNKECAHLLLAHNAPVKV, and QGWSPLAEAISYGDRQMITALLRKLKQQSR. Ser-411 is modified (phosphoserine).

It is found in the endoplasmic reticulum membrane. Functionally, acts as a molecular chaperone for G protein-coupled receptors, regulating their biogenesis and exit from the ER. This chain is Ankyrin repeat domain-containing protein 13C (Ankrd13c), found in Mus musculus (Mouse).